The following is a 483-amino-acid chain: Altronate oxidoreductase (483 aa).

18-29 (IIQFGEGNFLRA) contacts NAD(+).

This sequence belongs to the mannitol dehydrogenase family. UxaB subfamily.

The enzyme catalyses D-altronate + NAD(+) = keto-D-tagaturonate + NADH + H(+). Its pathway is carbohydrate metabolism; pentose and glucuronate interconversion. In Escherichia coli O7:K1 (strain IAI39 / ExPEC), this protein is Altronate oxidoreductase.